Reading from the N-terminus, the 457-residue chain is tRNA-2-methylthio-N(6)-dimethylallyladenosine synthase (457 aa).

The 118-residue stretch at 3–120 (KKVYVKTFGC…LPQMIDARRT (118 aa)) folds into the MTTase N-terminal domain. Cys12, Cys49, Cys83, Cys157, Cys161, and Cys164 together coordinate [4Fe-4S] cluster. Residues 143 to 377 (RVEGPTAFVS…QATIEENVAR (235 aa)) enclose the Radical SAM core domain. One can recognise a TRAM domain in the interval 380–447 (QSMVGKVERI…PHSLRGELVL (68 aa)).

The protein belongs to the methylthiotransferase family. MiaB subfamily. In terms of assembly, monomer. [4Fe-4S] cluster is required as a cofactor.

It localises to the cytoplasm. It catalyses the reaction N(6)-dimethylallyladenosine(37) in tRNA + (sulfur carrier)-SH + AH2 + 2 S-adenosyl-L-methionine = 2-methylsulfanyl-N(6)-dimethylallyladenosine(37) in tRNA + (sulfur carrier)-H + 5'-deoxyadenosine + L-methionine + A + S-adenosyl-L-homocysteine + 2 H(+). Functionally, catalyzes the methylthiolation of N6-(dimethylallyl)adenosine (i(6)A), leading to the formation of 2-methylthio-N6-(dimethylallyl)adenosine (ms(2)i(6)A) at position 37 in tRNAs that read codons beginning with uridine. The polypeptide is tRNA-2-methylthio-N(6)-dimethylallyladenosine synthase (Burkholderia multivorans (strain ATCC 17616 / 249)).